Here is a 280-residue protein sequence, read N- to C-terminus: L-proline cis-4-hydroxylase (280 aa).

His-106, Asp-108, and His-154 together coordinate Fe cation. Arg-164 is a binding site for 2-oxoglutarate.

This sequence belongs to the L-proline cis-4-/cis-3-hydroxylase family. The cofactor is Fe(2+).

It catalyses the reaction L-proline + 2-oxoglutarate + O2 = cis-4-hydroxy-L-proline + succinate + CO2. With respect to regulation, inhibited by metal ions such as Co(2+), Zn(2+), Cu(2+) or Ni(2+). Is also inhibited by EDTA or diethylpyrocarbonate (DEPC) in vitro. Unlike the procollagen-proline cis-3- and trans-4-hydroxylases from mammals, does not necessarily require L-ascorbate for activity although it does increase the activity of the enzyme. Dioxygenase that catalyzes the 2-oxoglutarate-dependent selective hydroxylation of free L-proline to cis-4-hydroxy-L-proline (cis-4-Hyp). The chain is L-proline cis-4-hydroxylase from Mesorhizobium japonicum (strain LMG 29417 / CECT 9101 / MAFF 303099) (Mesorhizobium loti (strain MAFF 303099)).